The sequence spans 313 residues: Ornithine carbamoyltransferase (313 aa).

Carbamoyl phosphate is bound by residues 57-60 (STRT), glutamine 84, arginine 108, and 135-138 (HPCQ). Residues asparagine 166, aspartate 230, and 234 to 235 (SM) each bind L-ornithine. Carbamoyl phosphate is bound by residues 270-271 (CL) and arginine 298.

Belongs to the aspartate/ornithine carbamoyltransferase superfamily. OTCase family. Homohexamer.

The protein resides in the cytoplasm. The catalysed reaction is carbamoyl phosphate + L-ornithine = L-citrulline + phosphate + H(+). It functions in the pathway amino-acid biosynthesis; L-arginine biosynthesis; L-arginine from L-ornithine and carbamoyl phosphate: step 1/3. Functionally, reversibly catalyzes the transfer of the carbamoyl group from carbamoyl phosphate (CP) to the N(epsilon) atom of ornithine (ORN) to produce L-citrulline. In Gloeobacter violaceus (strain ATCC 29082 / PCC 7421), this protein is Ornithine carbamoyltransferase.